Reading from the N-terminus, the 181-residue chain is Lysozyme C (181 aa).

Residues Met-1–Gly-19 form the signal peptide. A propeptide spanning residues Leu-139 to Glu-181 is cleaved from the precursor.

Belongs to the dictyostelium lysozyme family. Contains six disulfide bonds.

Its subcellular location is the cytoplasmic vesicle lumen. It catalyses the reaction Hydrolysis of (1-&gt;4)-beta-linkages between N-acetylmuramic acid and N-acetyl-D-glucosamine residues in a peptidoglycan and between N-acetyl-D-glucosamine residues in chitodextrins.. Functionally, has antibacterial activity. This is Lysozyme C (alyC) from Dictyostelium discoideum (Social amoeba).